We begin with the raw amino-acid sequence, 256 residues long: Low molecular mass lipoprotein 3 (256 aa).

A signal peptide spans 1–17; the sequence is MKPAIVILCLFVASLYA.

Belongs to the 30 kDa lipoprotein family. In terms of tissue distribution, detected in larval hemolymph (at protein level).

It is found in the secreted. The sequence is that of Low molecular mass lipoprotein 3 from Bombyx mori (Silk moth).